A 250-amino-acid chain; its full sequence is Triosephosphate isomerase (250 aa).

A substrate-binding site is contributed by 9–11 (NWK). Catalysis depends on histidine 95, which acts as the Electrophile. The active-site Proton acceptor is glutamate 167. Substrate is bound by residues glycine 173, serine 212, and 233-234 (GG).

This sequence belongs to the triosephosphate isomerase family. As to quaternary structure, homodimer.

It localises to the cytoplasm. It catalyses the reaction D-glyceraldehyde 3-phosphate = dihydroxyacetone phosphate. It functions in the pathway carbohydrate biosynthesis; gluconeogenesis. It participates in carbohydrate degradation; glycolysis; D-glyceraldehyde 3-phosphate from glycerone phosphate: step 1/1. Its function is as follows. Involved in the gluconeogenesis. Catalyzes stereospecifically the conversion of dihydroxyacetone phosphate (DHAP) to D-glyceraldehyde-3-phosphate (G3P). This is Triosephosphate isomerase from Psychromonas ingrahamii (strain DSM 17664 / CCUG 51855 / 37).